Here is a 284-residue protein sequence, read N- to C-terminus: Acetyl-coenzyme A carboxylase carboxyl transferase subunit beta (284 aa).

In terms of domain architecture, CoA carboxyltransferase N-terminal spans 25–284 (MWVKCPGCSA…ILGILYRPAA (260 aa)). Cys-29, Cys-32, Cys-48, and Cys-51 together coordinate Zn(2+). A C4-type zinc finger spans residues 29–51 (CPGCSATLLAKDLDANLNVCPTC).

The protein belongs to the AccD/PCCB family. In terms of assembly, acetyl-CoA carboxylase is a heterohexamer composed of biotin carboxyl carrier protein (AccB), biotin carboxylase (AccC) and two subunits each of ACCase subunit alpha (AccA) and ACCase subunit beta (AccD). Zn(2+) is required as a cofactor.

The protein localises to the cytoplasm. The enzyme catalyses N(6)-carboxybiotinyl-L-lysyl-[protein] + acetyl-CoA = N(6)-biotinyl-L-lysyl-[protein] + malonyl-CoA. It functions in the pathway lipid metabolism; malonyl-CoA biosynthesis; malonyl-CoA from acetyl-CoA: step 1/1. In terms of biological role, component of the acetyl coenzyme A carboxylase (ACC) complex. Biotin carboxylase (BC) catalyzes the carboxylation of biotin on its carrier protein (BCCP) and then the CO(2) group is transferred by the transcarboxylase to acetyl-CoA to form malonyl-CoA. The protein is Acetyl-coenzyme A carboxylase carboxyl transferase subunit beta of Pelobacter propionicus (strain DSM 2379 / NBRC 103807 / OttBd1).